The sequence spans 629 residues: tRNA uridine 5-carboxymethylaminomethyl modification enzyme MnmG (629 aa).

FAD is bound at residue 13–18 (GGGHAG). Position 273-287 (273-287 (GPRYCPSIEDKVNRF)) interacts with NAD(+).

It belongs to the MnmG family. Homodimer. Heterotetramer of two MnmE and two MnmG subunits. FAD serves as cofactor.

The protein resides in the cytoplasm. In terms of biological role, NAD-binding protein involved in the addition of a carboxymethylaminomethyl (cmnm) group at the wobble position (U34) of certain tRNAs, forming tRNA-cmnm(5)s(2)U34. The polypeptide is tRNA uridine 5-carboxymethylaminomethyl modification enzyme MnmG (Shewanella pealeana (strain ATCC 700345 / ANG-SQ1)).